A 232-amino-acid chain; its full sequence is Thiamine import ATP-binding protein ThiQ (232 aa).

One can recognise an ABC transporter domain in the interval 2–230 (LKLTDITWLY…KASASAILGI (229 aa)). ATP is bound at residue 32 to 39 (GPSGAGKS).

This sequence belongs to the ABC transporter superfamily. Thiamine importer (TC 3.A.1.19.1) family. In terms of assembly, the complex is composed of two ATP-binding proteins (ThiQ), two transmembrane proteins (ThiP) and a solute-binding protein (ThiB).

It is found in the cell inner membrane. It carries out the reaction thiamine(out) + ATP + H2O = thiamine(in) + ADP + phosphate + H(+). Part of the ABC transporter complex ThiBPQ involved in thiamine import. Responsible for energy coupling to the transport system. This Shigella flexneri serotype 5b (strain 8401) protein is Thiamine import ATP-binding protein ThiQ.